The primary structure comprises 427 residues: Light-independent protochlorophyllide reductase subunit N (427 aa).

Residues cysteine 29, cysteine 54, and cysteine 115 each coordinate [4Fe-4S] cluster.

The protein belongs to the BchN/ChlN family. In terms of assembly, protochlorophyllide reductase is composed of three subunits; BchL, BchN and BchB. Forms a heterotetramer of two BchB and two BchN subunits. Requires [4Fe-4S] cluster as cofactor.

The catalysed reaction is chlorophyllide a + oxidized 2[4Fe-4S]-[ferredoxin] + 2 ADP + 2 phosphate = protochlorophyllide a + reduced 2[4Fe-4S]-[ferredoxin] + 2 ATP + 2 H2O. It functions in the pathway porphyrin-containing compound metabolism; bacteriochlorophyll biosynthesis (light-independent). In terms of biological role, component of the dark-operative protochlorophyllide reductase (DPOR) that uses Mg-ATP and reduced ferredoxin to reduce ring D of protochlorophyllide (Pchlide) to form chlorophyllide a (Chlide). This reaction is light-independent. The NB-protein (BchN-BchB) is the catalytic component of the complex. This is Light-independent protochlorophyllide reductase subunit N from Bradyrhizobium sp. (strain ORS 278).